Reading from the N-terminus, the 309-residue chain is Uricase (309 aa).

At Ala-2 the chain carries N-acetylalanine. Residues Lys-16 and Thr-63 each act as charge relay system in the active site. Residues Thr-63, Asp-64, Phe-165, Arg-182, Val-237, Gln-238, and Asn-264 each coordinate urate. His-266 serves as the catalytic Charge relay system. The short motif at 307 to 309 (SKL) is the Microbody targeting signal element.

It belongs to the uricase family.

The protein resides in the peroxisome. It catalyses the reaction urate + O2 + H2O = 5-hydroxyisourate + H2O2. It functions in the pathway purine metabolism; urate degradation; (S)-allantoin from urate: step 1/3. Its function is as follows. Catalyzes the oxidation of uric acid to 5-hydroxyisourate, which is further processed to form (S)-allantoin. The polypeptide is Uricase (Arabidopsis thaliana (Mouse-ear cress)).